Here is a 148-residue protein sequence, read N- to C-terminus: Nucleoside diphosphate kinase B (148 aa).

ATP is bound by residues K9, F57, R85, T91, R102, and N112. H115 acts as the Pros-phosphohistidine intermediate in catalysis.

The protein belongs to the NDK family. The cofactor is Mg(2+).

It carries out the reaction a 2'-deoxyribonucleoside 5'-diphosphate + ATP = a 2'-deoxyribonucleoside 5'-triphosphate + ADP. The enzyme catalyses a ribonucleoside 5'-diphosphate + ATP = a ribonucleoside 5'-triphosphate + ADP. Major role in the synthesis of nucleoside triphosphates other than ATP. The ATP gamma phosphate is transferred to the NDP beta phosphate via a ping-pong mechanism, using a phosphorylated active-site intermediate. This chain is Nucleoside diphosphate kinase B, found in Flaveria bidentis (Coastal plain yellowtops).